Here is a 347-residue protein sequence, read N- to C-terminus: Probable dual-specificity RNA methyltransferase RlmN (347 aa).

The Proton acceptor role is filled by glutamate 91. The region spanning 97-327 (YKYGNSICVS…ATVRREMGSD (231 aa)) is the Radical SAM core domain. A disulfide bridge connects residues cysteine 104 and cysteine 332. [4Fe-4S] cluster-binding residues include cysteine 111, cysteine 115, and cysteine 118. Residues 158–159 (GE), serine 190, 213–215 (SLH), and asparagine 289 each bind S-adenosyl-L-methionine. The S-methylcysteine intermediate role is filled by cysteine 332.

This sequence belongs to the radical SAM superfamily. RlmN family. [4Fe-4S] cluster serves as cofactor.

The protein localises to the cytoplasm. The catalysed reaction is adenosine(2503) in 23S rRNA + 2 reduced [2Fe-2S]-[ferredoxin] + 2 S-adenosyl-L-methionine = 2-methyladenosine(2503) in 23S rRNA + 5'-deoxyadenosine + L-methionine + 2 oxidized [2Fe-2S]-[ferredoxin] + S-adenosyl-L-homocysteine. It carries out the reaction adenosine(37) in tRNA + 2 reduced [2Fe-2S]-[ferredoxin] + 2 S-adenosyl-L-methionine = 2-methyladenosine(37) in tRNA + 5'-deoxyadenosine + L-methionine + 2 oxidized [2Fe-2S]-[ferredoxin] + S-adenosyl-L-homocysteine. Functionally, specifically methylates position 2 of adenine 2503 in 23S rRNA and position 2 of adenine 37 in tRNAs. This is Probable dual-specificity RNA methyltransferase RlmN from Clostridium perfringens (strain SM101 / Type A).